The following is a 223-amino-acid chain: Large ribosomal subunit protein uL3 (223 aa).

Belongs to the universal ribosomal protein uL3 family. As to quaternary structure, part of the 50S ribosomal subunit. Forms a cluster with proteins L14 and L19.

Its function is as follows. One of the primary rRNA binding proteins, it binds directly near the 3'-end of the 23S rRNA, where it nucleates assembly of the 50S subunit. The sequence is that of Large ribosomal subunit protein uL3 from Mycoplasma capricolum subsp. capricolum (strain California kid / ATCC 27343 / NCTC 10154).